The primary structure comprises 776 residues: Homoaconitase, mitochondrial (776 aa).

A mitochondrion-targeting transit peptide spans 1 to 24 (MVALRRAVALNAVAIARLQTRALT). [4Fe-4S] cluster-binding residues include C392, C459, and C462.

This sequence belongs to the aconitase/IPM isomerase family. Requires [4Fe-4S] cluster as cofactor.

It is found in the mitochondrion. The catalysed reaction is (2R,3S)-homoisocitrate = cis-homoaconitate + H2O. The protein operates within amino-acid biosynthesis; L-lysine biosynthesis via AAA pathway; L-alpha-aminoadipate from 2-oxoglutarate: step 3/5. In terms of biological role, catalyzes the reversible hydration of cis-homoaconitate to (2R,3S)-homoisocitrate, a step in the alpha-aminoadipate pathway for lysine biosynthesis. This Gibberella zeae (strain ATCC MYA-4620 / CBS 123657 / FGSC 9075 / NRRL 31084 / PH-1) (Wheat head blight fungus) protein is Homoaconitase, mitochondrial (LYS4).